Reading from the N-terminus, the 340-residue chain is rRNA adenine N-6-methyltransferase (340 aa).

Residues Met-1–Arg-25 show a composition bias toward low complexity. A disordered region spans residues Met-1 to Gln-37. The S-adenosyl-L-methionine site is built by Asn-38, Leu-40, Gly-65, Glu-86, Asp-111, and Ala-127. A disordered region spans residues Arg-284–Ala-340. A compositionally biased stretch (gly residues) spans Pro-301–Gly-314. Positions Pro-315–Gly-329 are enriched in basic and acidic residues.

The protein belongs to the class I-like SAM-binding methyltransferase superfamily. rRNA adenine N(6)-methyltransferase family.

In terms of biological role, involved in erythromycin resistance. The polypeptide is rRNA adenine N-6-methyltransferase (ermA) (Aeromicrobium erythreum (strain ATCC 51598 / DSM 8599 / JCM 8359 / NBRC 15406 / NRRL B-3381)).